Here is a 314-residue protein sequence, read N- to C-terminus: Fibrinogen-like protein 1 (314 aa).

Residues 1-22 (MGEIRSFLLVTIALMMGREIWA) form the signal peptide. Positions 25 to 59 (NSKCLLEQERLRAQVQQLETRVKQQQARIAQLMHE) form a coiled coil. Residues 76–308 (LGGKRQYADC…SVVMKIRPND (233 aa)) enclose the Fibrinogen C-terminal domain. Disulfide bonds link Cys85/Cys114 and Cys250/Cys263.

As to quaternary structure, homodimer. Interacts (via the Fibrinogen C-terminal domain) with LAG3 (via Ig-like domains 1 and 2).

The protein localises to the secreted. Immune suppressive molecule that inhibits antigen-specific T-cell activation by acting as a major ligand of LAG3. Responsible for LAG3 T-cell inhibitory function. Binds LAG3 independently from MHC class II (MHC-II). Secreted by, and promotes growth of, hepatocytes. The polypeptide is Fibrinogen-like protein 1 (Mesocricetus auratus (Golden hamster)).